We begin with the raw amino-acid sequence, 430 residues long: Histidine--tRNA ligase (430 aa).

The protein belongs to the class-II aminoacyl-tRNA synthetase family. As to quaternary structure, homodimer.

The protein resides in the cytoplasm. It catalyses the reaction tRNA(His) + L-histidine + ATP = L-histidyl-tRNA(His) + AMP + diphosphate + H(+). The protein is Histidine--tRNA ligase of Acinetobacter baumannii (strain ACICU).